A 347-amino-acid polypeptide reads, in one-letter code: Melanoma-associated antigen B10 (347 aa).

Positions M1 to A18 are enriched in basic residues. 2 disordered regions span residues M1–G20 and G56–E92. Residues A67–S78 are compositionally biased toward low complexity. Over residues R81 to E92 the composition is skewed to basic and acidic residues. Positions V111 to A310 constitute an MAGE domain. The segment at V328 to Q347 is disordered.

This Homo sapiens (Human) protein is Melanoma-associated antigen B10 (MAGEB10).